The primary structure comprises 227 residues: Peroxiredoxin 1 (227 aa).

In terms of domain architecture, Thioredoxin spans 6–161 (PLIGEKFPEM…ILRLIKSLQM (156 aa)). The Cysteine sulfenic acid (-SOH) intermediate role is filled by Cys48. Residue Arg124 coordinates substrate.

This sequence belongs to the peroxiredoxin family. Prx6 subfamily. Homodecamer. Pentamer of dimers that assemble into a ring structure.

The protein resides in the cytoplasm. It catalyses the reaction a hydroperoxide + [thioredoxin]-dithiol = an alcohol + [thioredoxin]-disulfide + H2O. In terms of biological role, thiol-specific peroxidase that catalyzes the reduction of hydrogen peroxide and organic hydroperoxides to water and alcohols, respectively. Plays a role in cell protection against oxidative stress by detoxifying peroxides. This is Peroxiredoxin 1 from Picrophilus torridus (strain ATCC 700027 / DSM 9790 / JCM 10055 / NBRC 100828 / KAW 2/3).